The primary structure comprises 240 residues: uncharacterized protein (240 aa).

This is an uncharacterized protein from Acidianus two-tailed virus (ATV).